A 211-amino-acid chain; its full sequence is Arginine exporter protein ArgO (211 aa).

At 1–38 (MFSYYFQGLALGAAMILPLGPQNAFVMNQGIRRQYHIM) the chain is on the cytoplasmic side. A helical membrane pass occupies residues 39 to 58 (IALLCAISDLVLICAGIFGG). Residues 59-63 (SALLM) lie on the Periplasmic side of the membrane. The chain crosses the membrane as a helical span at residues 64 to 91 (QSPWLLALVTWGGVAFLLWYGFGAFKTA). Residues 92–102 (MSSNIELASAE) are Cytoplasmic-facing. The chain crosses the membrane as a helical span at residues 103 to 130 (VMKQGRWKIIATMLAVTWLNPHVYLDTF). Residues 131–140 (VVLGSLGGQL) lie on the Periplasmic side of the membrane. The helical transmembrane segment at 141 to 170 (DVEPKRWFALGTISASFLWFFGLALLAAWL) threads the bilayer. At 171–173 (APR) the chain is on the cytoplasmic side. The chain crosses the membrane as a helical span at residues 174–200 (LRTAKAQRIINLVVGCVMWFIALQLAR). Over 201 to 211 (DGIAHAQALFS) the chain is Periplasmic.

This sequence belongs to the LysE/ArgO transporter (TC 2.A.75) family. As to quaternary structure, monomer.

It is found in the cell inner membrane. It carries out the reaction L-arginine(in) = L-arginine(out). Involved in the export of arginine. Important to control the intracellular level of arginine and the correct balance between arginine and lysine. May also be involved in the export of canavanine (a plant-derived antimetabolite). In Escherichia coli (strain K12), this protein is Arginine exporter protein ArgO.